Consider the following 708-residue polypeptide: Tryptophan synthase (708 aa).

The tract at residues 1-305 (MEGIKQTFQR…EADIDAQLAA (305 aa)) is tryptophan synthase alpha chain. Active-site proton acceptor residues include glutamate 49 and aspartate 60. Positions 306-708 (LHGTIPKRFG…GPKIGWDLRF (403 aa)) are tryptophan synthase beta chain. At lysine 392 the chain carries N6-(pyridoxal phosphate)lysine.

In the N-terminal section; belongs to the TrpA family. This sequence in the C-terminal section; belongs to the TrpB family. The cofactor is pyridoxal 5'-phosphate.

It catalyses the reaction (1S,2R)-1-C-(indol-3-yl)glycerol 3-phosphate + L-serine = D-glyceraldehyde 3-phosphate + L-tryptophan + H2O. Its pathway is amino-acid biosynthesis; L-tryptophan biosynthesis; L-tryptophan from chorismate: step 5/5. This Neurospora crassa (strain ATCC 24698 / 74-OR23-1A / CBS 708.71 / DSM 1257 / FGSC 987) protein is Tryptophan synthase (trp-3).